The sequence spans 405 residues: Eukaryotic translation initiation factor 5 (405 aa).

GTP is bound at residue 27 to 34 (GRGNGIKT). The segment at 143–202 (NPPDSVSGSKKKKKAATASANVRGGGLSISDIAQGKSQNAPSDGTGSSTPQHHDEDEDEL) is disordered. Residues S170 and S172 each carry the phosphoserine modification. Polar residues predominate over residues 177–192 (GKSQNAPSDGTGSSTP). T191 carries the post-translational modification Phosphothreonine. A Phosphoserine modification is found at S228. In terms of domain architecture, W2 spans 241–402 (VNSELTQLDE…ETAESDDDEE (162 aa)). At T317 the chain carries Phosphothreonine. At S397 the chain carries Phosphoserine.

The protein belongs to the eIF-2-beta/eIF-5 family. As to quaternary structure, monomer. The factors eIF-1, eIF-2, eIF-3, TIF5/eIF-5 and methionyl-tRNAi form a multifactor complex (MFC) that may bind to the 40S ribosome. TIF32, NIP1 and TIF5/eIF-5 comprise a minimal 40S-ribosome-binding unit. Interacts with NIP1. Interacts with SUI3.

Catalyzes the hydrolysis of GTP bound to the 40S ribosomal initiation complex (40S.mRNA.Met-tRNA[F].eIF-2.GTP) with the subsequent joining of a 60S ribosomal subunit resulting in the release of eIF-2 and the guanine nucleotide. The subsequent joining of a 60S ribosomal subunit results in the formation of a functional 80S initiation complex (80S.mRNA.Met-tRNA[F]). eIF-5 is essential for cell viability. The sequence is that of Eukaryotic translation initiation factor 5 (TIF5) from Saccharomyces cerevisiae (strain ATCC 204508 / S288c) (Baker's yeast).